Reading from the N-terminus, the 386-residue chain is Phosphoglycerate kinase (386 aa).

Residues 21-23 (DLN), arginine 36, 59-62 (HLGR), arginine 112, and arginine 145 each bind substrate. ATP-binding positions include lysine 196, glutamate 313, and 339 to 342 (GGDT).

This sequence belongs to the phosphoglycerate kinase family. As to quaternary structure, monomer.

The protein resides in the cytoplasm. It carries out the reaction (2R)-3-phosphoglycerate + ATP = (2R)-3-phospho-glyceroyl phosphate + ADP. It participates in carbohydrate degradation; glycolysis; pyruvate from D-glyceraldehyde 3-phosphate: step 2/5. The chain is Phosphoglycerate kinase (pgk) from Haemophilus influenzae (strain ATCC 51907 / DSM 11121 / KW20 / Rd).